Reading from the N-terminus, the 220-residue chain is GILT-like protein CBG03282 (220 aa).

An N-terminal signal peptide occupies residues 1-22 (MTIIRTLFVYYSFLFILVLCSS). An N-linked (GlcNAc...) asparagine glycan is attached at asparagine 131.

Belongs to the GILT family.

The protein resides in the secreted. The chain is GILT-like protein CBG03282 from Caenorhabditis briggsae.